A 225-amino-acid chain; its full sequence is NAD(P)H-quinone oxidoreductase subunit K, chloroplastic (225 aa).

[4Fe-4S] cluster-binding residues include Cys43, Cys44, Cys108, and Cys139.

It belongs to the complex I 20 kDa subunit family. In terms of assembly, NDH is composed of at least 16 different subunits, 5 of which are encoded in the nucleus. [4Fe-4S] cluster serves as cofactor.

It is found in the plastid. The protein localises to the chloroplast thylakoid membrane. It catalyses the reaction a plastoquinone + NADH + (n+1) H(+)(in) = a plastoquinol + NAD(+) + n H(+)(out). The enzyme catalyses a plastoquinone + NADPH + (n+1) H(+)(in) = a plastoquinol + NADP(+) + n H(+)(out). Functionally, NDH shuttles electrons from NAD(P)H:plastoquinone, via FMN and iron-sulfur (Fe-S) centers, to quinones in the photosynthetic chain and possibly in a chloroplast respiratory chain. The immediate electron acceptor for the enzyme in this species is believed to be plastoquinone. Couples the redox reaction to proton translocation, and thus conserves the redox energy in a proton gradient. The sequence is that of NAD(P)H-quinone oxidoreductase subunit K, chloroplastic from Manihot esculenta (Cassava).